The sequence spans 699 residues: Mannan-binding lectin serine protease 1 (699 aa).

Positions 1-19 are cleaved as a signal peptide; that stretch reads MRWLLLYYALCFSLSKASA. The region spanning 20 to 138 is the CUB 1 domain; it reads HTVELNNMFG…TGFDAHYMAV (119 aa). Positions 20 to 184 are homodimerization; that stretch reads HTVELNNMFG…HTDNRTCRVE (165 aa). The segment at 20 to 184 is interaction with MBL2; the sequence is HTVELNNMFG…HTDNRTCRVE (165 aa). The segment at 20 to 278 is interaction with FCN2; sequence HTVELNNMFG…STQSHSVLIL (259 aa). An N-linked (GlcNAc...) asparagine glycan is attached at Asn49. Ca(2+) contacts are provided by Glu68, Asp76, Asp121, Ser123, Asp139, Val140, and Glu142. A disulfide bridge links Cys73 with Cys91. Residues 139–182 enclose the EGF-like; calcium-binding domain; the sequence is DVDECKEREDEELSCDHYCHNYIGGYYCSCRFGYILHTDNRTCR. Intrachain disulfides connect Cys143/Cys157, Cys153/Cys166, Cys168/Cys181, and Cys185/Cys212. Positions 159, 160, and 163 each coordinate Ca(2+). The residue at position 159 (Asn159) is a (3R)-3-hydroxyasparagine. N-linked (GlcNAc...) (complex) asparagine glycosylation occurs at Asn178. Positions 185-297 constitute a CUB 2 domain; the sequence is CSDNLFTQRT…RGWRLSYRAA (113 aa). Residues Glu235, Asp245, Asp282, and Ser284 each coordinate Ca(2+). Cys242 and Cys260 are disulfide-bonded. Sushi domains follow at residues 299–364 and 365–434; these read NECP…TCKI and VDCR…TCLP. Intrachain disulfides connect Cys301/Cys349, Cys329/Cys362, Cys367/Cys414, Cys397/Cys432, Cys436/Cys572, and Cys475/Cys491. Residue Asn385 is glycosylated (N-linked (GlcNAc...) (complex) asparagine). Residue Asn407 is glycosylated (N-linked (GlcNAc...) asparagine). Residues 449 to 696 form the Peptidase S1 domain; the sequence is IFNGRPAQKG…NKDWIQRVTG (248 aa). His490 serves as the catalytic Charge relay system. Leu533 is a glycosylation site (N-linked (GlcNAc) asparagine). Asp552 acts as the Charge relay system in catalysis. An N-linked (GlcNAc) asparagine glycan is attached at Glu599. 2 disulfides stabilise this stretch: Cys614–Cys631 and Cys642–Cys672. Ser646 acts as the Charge relay system in catalysis.

It belongs to the peptidase S1 family. As to quaternary structure, homodimer. Interacts with the oligomeric lectins MBL2, FCN2 and FCN3; triggers the lectin pathway of complement through activation of C3. Interacts with SERPING1. Interacts with COLEC11; probably triggers the lectin pathway of complement. The iron and 2-oxoglutarate dependent 3-hydroxylation of aspartate and asparagine is (R) stereospecific within EGF domains. Post-translationally, N-glycosylated. Some N-linked glycan are of the complex-type. In terms of processing, autoproteolytic processing of the proenzyme produces the active enzyme composed on the heavy and the light chain held together by a disulfide bond. Isoform 1 but not isoform 2 is activated through autoproteolytic processing. As to expression, protein of the plasma which is primarily expressed by liver.

It is found in the secreted. With respect to regulation, inhibited by SERPING1 and A2M. In terms of biological role, functions in the lectin pathway of complement, which performs a key role in innate immunity by recognizing pathogens through patterns of sugar moieties and neutralizing them. The lectin pathway is triggered upon binding of mannan-binding lectin (MBL) and ficolins to sugar moieties which leads to activation of the associated proteases MASP1 and MASP2. Functions as an endopeptidase and may activate MASP2 or C2 or directly activate C3 the key component of complement reaction. Isoform 2 may have an inhibitory effect on the activation of the lectin pathway of complement or may cleave IGFBP5. Also plays a role in development. This is Mannan-binding lectin serine protease 1 (MASP1) from Homo sapiens (Human).